Reading from the N-terminus, the 1231-residue chain is Chromosome-associated kinesin KIF4 (1231 aa).

A Kinesin motor domain is found at 9–337 (PVRVALRCRP…LRYADRARKI (329 aa)). ATP is bound at residue 88–95 (GQTGSGKT). The stretch at 351-1000 (ELNHLKQQVQ…IKQKLTLLQV (650 aa)) forms a coiled coil. Ser395 carries the post-translational modification Phosphoserine. Thr800 carries the phosphothreonine modification. Ser802, Ser811, and Ser816 each carry phosphoserine. The globular stretch occupies residues 1001 to 1231 (ASKQKPHLTR…GCSPIQEESH (231 aa)). The disordered stretch occupies residues 1189-1212 (HPELKSIASESQENKAIGKKKKRA). A phosphoserine mark is found at Ser1224 and Ser1230.

Belongs to the TRAFAC class myosin-kinesin ATPase superfamily. Kinesin family. Chromokinesin subfamily. Requires [2Fe-2S] cluster as cofactor. It depends on [4Fe-4S] cluster as a cofactor. As to expression, expressed in pyramidal cells in juvenile hippocampus, granular cells in juvenile cerebellar cortex and in adult spleen.

It is found in the nucleus. Its subcellular location is the chromosome. The protein localises to the cytoplasm. It localises to the cytoskeleton. Its function is as follows. Iron-sulfur (Fe-S) cluster binding motor protein that has a role in chromosome segregation during mitosis. Required for mitotic chromosomal positioning and bipolar spindle stabilization. The sequence is that of Chromosome-associated kinesin KIF4 (Kif4) from Mus musculus (Mouse).